The sequence spans 123 residues: Non-specific lipid-transfer protein 3 (123 aa).

Positions 1-25 (MASSGQLLKLVCLVAVMCCMAVGGP) are cleaved as a signal peptide. 4 cysteine pairs are disulfide-bonded: Cys-33–Cys-80, Cys-43–Cys-57, Cys-58–Cys-105, and Cys-78–Cys-119.

Belongs to the plant LTP family.

In terms of biological role, plant non-specific lipid-transfer proteins transfer phospholipids as well as galactolipids across membranes. May play a role in wax or cutin deposition in the cell walls of expanding epidermal cells and certain secretory tissues. The chain is Non-specific lipid-transfer protein 3 from Prunus dulcis (Almond).